We begin with the raw amino-acid sequence, 405 residues long: Threonine synthase (405 aa).

N6-(pyridoxal phosphate)lysine is present on K104. Pyridoxal 5'-phosphate-binding positions include N130, 231 to 235 (GNAGN), and T369.

The protein belongs to the threonine synthase family. In terms of assembly, homotrimer. Pyridoxal 5'-phosphate is required as a cofactor.

The enzyme catalyses O-phospho-L-homoserine + H2O = L-threonine + phosphate. It participates in amino-acid biosynthesis; L-threonine biosynthesis; L-threonine from L-aspartate: step 5/5. In terms of biological role, catalyzes the gamma-elimination of phosphate from L-phosphohomoserine and the beta-addition of water to produce L-threonine. Does not catalyze the conversion of O-acetyl-L-homoserine into threonine. The chain is Threonine synthase (thrC) from Methanosarcina acetivorans (strain ATCC 35395 / DSM 2834 / JCM 12185 / C2A).